Consider the following 358-residue polypeptide: Protein Wnt-8b (358 aa).

Residues 1-23 (MFMHLEVYYYAFILMAHMKTCCG) form the signal peptide. Cys-55 and Cys-66 are disulfide-bonded. An N-linked (GlcNAc...) asparagine glycan is attached at Asn-104. 10 cysteine pairs are disulfide-bonded: Cys-105–Cys-113, Cys-115–Cys-133, Cys-181–Cys-195, Cys-183–Cys-190, Cys-257–Cys-295, Cys-273–Cys-288, Cys-292–Cys-334, Cys-310–Cys-325, Cys-312–Cys-322, and Cys-317–Cys-318. A lipid anchor (O-palmitoleoyl serine) is attached at Ser-187. Residues Asn-260 and Asn-279 are each glycosylated (N-linked (GlcNAc...) asparagine). Asn-345 carries N-linked (GlcNAc...) asparagine glycosylation.

This sequence belongs to the Wnt family. Palmitoleoylation is required for efficient binding to frizzled receptors. Depalmitoleoylation leads to Wnt signaling pathway inhibition. Post-translationally, proteolytic processing by tiki1 and tiki2 promotes oxidation and formation of large disulfide-bond oligomers, leading to inactivation of wnt8b. As to expression, hindbrain r1, 2 and 5.

The protein resides in the secreted. The protein localises to the extracellular space. It localises to the extracellular matrix. In terms of biological role, ligand for fzd8a, a member of the G-protein coupled frizzled receptor family. May play a role in the establishment of polarity in the nervous system. Involved in canonical Wnt signaling pathway. During embryonic development, required for the acquisition of caudal diencephalic fate. Antagonizes eye specification. The polypeptide is Protein Wnt-8b (wnt8b) (Danio rerio (Zebrafish)).